The primary structure comprises 764 residues: Semaphorin-3D (764 aa).

The N-terminal stretch at Met1–Cys41 is a signal peptide. The 488-residue stretch at Arg48 to Leu535 folds into the Sema domain. Cys121 and Cys132 are disulfide-bonded. A glycan (N-linked (GlcNAc...) asparagine) is linked at Asn143. Cystine bridges form between Cys150–Cys159, Cys290–Cys402, and Cys314–Cys362. Asn490 is a glycosylation site (N-linked (GlcNAc...) asparagine). An intrachain disulfide couples Cys538 to Cys556. An N-linked (GlcNAc...) asparagine glycan is attached at Asn610. The Ig-like C2-type domain occupies Gly661–Glu740. The cysteines at positions 668 and 733 are disulfide-linked. Residues Gln743–His764 form a disordered region.

The protein belongs to the semaphorin family.

Its subcellular location is the secreted. In terms of biological role, may play a role in the guidance of several axon pathways. This Danio rerio (Zebrafish) protein is Semaphorin-3D (sema3d).